We begin with the raw amino-acid sequence, 300 residues long: 4-hydroxy-tetrahydrodipicolinate synthase (300 aa).

A pyruvate-binding site is contributed by T56. The active-site Proton donor/acceptor is Y145. K173 serves as the catalytic Schiff-base intermediate with substrate. V215 contacts pyruvate.

It belongs to the DapA family. As to quaternary structure, homotetramer; dimer of dimers.

The protein resides in the cytoplasm. The enzyme catalyses L-aspartate 4-semialdehyde + pyruvate = (2S,4S)-4-hydroxy-2,3,4,5-tetrahydrodipicolinate + H2O + H(+). Its pathway is amino-acid biosynthesis; L-lysine biosynthesis via DAP pathway; (S)-tetrahydrodipicolinate from L-aspartate: step 3/4. Its function is as follows. Catalyzes the condensation of (S)-aspartate-beta-semialdehyde [(S)-ASA] and pyruvate to 4-hydroxy-tetrahydrodipicolinate (HTPA). This Prochlorococcus marinus (strain MIT 9301) protein is 4-hydroxy-tetrahydrodipicolinate synthase.